The primary structure comprises 360 residues: Inhibin alpha chain (360 aa).

The first 17 residues, 1–17 (MWLQLLLLLLAPQGGHG), serve as a signal peptide directing secretion. Positions 18–60 (CHGLELDRELVLAKVRALFLDALGPPPVTGEGGDPGVRRLHRR) are excised as a propeptide. Positions 61–226 (HAVGGFMRRG…PPSGGERARR (166 aa)) are cleaved as a propeptide — inhibin alpha N-terminal region. N140 and N262 each carry an N-linked (GlcNAc...) asparagine glycan. Intrachain disulfides connect C256–C322, C285–C357, and C289–C359.

This sequence belongs to the TGF-beta family. In terms of assembly, dimeric, linked by one or more disulfide bonds. Activin B is a dimer of alpha and beta-B. Inhibin A is a dimer of alpha and beta-A. Inhibin B is a dimer of alpha and beta-B. Interacts with TGFBR3L; this interaction regulates female fertility. In terms of processing, proteolytic processing yields a number of bioactive forms, consisting either solely of the mature alpha chain, of the most N-terminal propeptide linked through a disulfide bond to the mature alpha chain, or of the entire proprotein.

It localises to the secreted. In terms of biological role, inhibins and activins inhibit and activate, respectively, the secretion of follitropin by the pituitary gland. Inhibins/activins are involved in regulating a number of diverse functions such as hypothalamic and pituitary hormone secretion, gonadal hormone secretion, germ cell development and maturation, erythroid differentiation, insulin secretion, nerve cell survival, embryonic axial development or bone growth, depending on their subunit composition. Inhibins appear to oppose the functions of activins. Inhibin A is a dimer of alpha/INHA and beta-A/INHBA that functions as a feedback regulator in the hypothalamic-pituitary-gonadal (HPG) axis. Inhibits the secretion of FSH from the anterior pituitary gland by acting on pituitary gonadotrope cells. Antagonizes activin A by binding to the proteoglycan, betaglycan, and forming a stable complex with and, thereby, sequestering type II activin receptors while excluding type I receptor. Its function is as follows. Inhibin B is a dimer of alpha and beta-B that plays a crucial role in the regulation of the reproductive system by inhibiting the secretion of follicle-stimulating hormone (FSH) from the anterior pituitary gland. Thereby, maintains reproductive homeostasis in both males and females. Acts as a more potent suppressor of FSH release than inhibin A. Functions as competitive receptor antagonist binding activin type II receptors with high affinity in the presence of the TGF-beta type III coreceptor/TGFBR3L. This Bos taurus (Bovine) protein is Inhibin alpha chain (INHA).